Here is a 618-residue protein sequence, read N- to C-terminus: 1-deoxy-D-xylulose-5-phosphate synthase (618 aa).

Thiamine diphosphate is bound by residues His70 and 111 to 113 (GHS). Residue Asp142 participates in Mg(2+) binding. Residues 143-144 (GS), Asn171, Tyr278, and Glu360 contribute to the thiamine diphosphate site. Asn171 provides a ligand contact to Mg(2+).

Belongs to the transketolase family. DXPS subfamily. Homodimer. Mg(2+) is required as a cofactor. Thiamine diphosphate serves as cofactor.

It carries out the reaction D-glyceraldehyde 3-phosphate + pyruvate + H(+) = 1-deoxy-D-xylulose 5-phosphate + CO2. The protein operates within metabolic intermediate biosynthesis; 1-deoxy-D-xylulose 5-phosphate biosynthesis; 1-deoxy-D-xylulose 5-phosphate from D-glyceraldehyde 3-phosphate and pyruvate: step 1/1. Catalyzes the acyloin condensation reaction between C atoms 2 and 3 of pyruvate and glyceraldehyde 3-phosphate to yield 1-deoxy-D-xylulose-5-phosphate (DXP). This Helicobacter pylori (strain ATCC 700392 / 26695) (Campylobacter pylori) protein is 1-deoxy-D-xylulose-5-phosphate synthase.